The chain runs to 1357 residues: DNA-directed RNA polymerase subunit beta (1357 aa).

The protein belongs to the RNA polymerase beta chain family. As to quaternary structure, the RNAP catalytic core consists of 2 alpha, 1 beta, 1 beta' and 1 omega subunit. When a sigma factor is associated with the core the holoenzyme is formed, which can initiate transcription.

It carries out the reaction RNA(n) + a ribonucleoside 5'-triphosphate = RNA(n+1) + diphosphate. Functionally, DNA-dependent RNA polymerase catalyzes the transcription of DNA into RNA using the four ribonucleoside triphosphates as substrates. The sequence is that of DNA-directed RNA polymerase subunit beta from Hahella chejuensis (strain KCTC 2396).